We begin with the raw amino-acid sequence, 419 residues long: MNIIDELEWRGAIYQQTDEEGLRKWVDEKQISLYCGIDPSGDSMHIGHLIPFMILRRFQNAGHRPIILVGGATGTIGDPSGKKEERKLQSMEQISKNVESLRVQLGKIFDFEGDSAASMVNNYDWTKDVSILDFLRDYGKEFNVNTMLSKDIVASRLEVGISFTEFAYQILQAMDFNHLYEFNDCRLQIGGSDQWGNITAGLDLIRKKQGENAKAFGLTIPLLTKADGTKFGKSEGGAIWLNPEKTTPYEFYQFWINTDDRDVVKYLKYFTFLTEAEIDELAKQVETEPHLRAAQKTLAAEMTKFVHSEEALEQALKISKALFSGDVKALTADEIEQGFKDVPTFVAEDSEANLVDWLVTLGIEPSKRQAREDVGNGAIYINGERQQDLEKIMDASDRIENKFTIVRRGKKKYFLVSYK.

L-tyrosine is bound at residue Tyr34. The 'HIGH' region signature appears at 39–48; sequence PSGDSMHIGH. Residues Tyr168 and Gln172 each coordinate L-tyrosine. A 'KMSKS' region motif is present at residues 230–234; sequence KFGKS. Lys233 provides a ligand contact to ATP. The region spanning 352–418 is the S4 RNA-binding domain; that stretch reads ANLVDWLVTL…GKKKYFLVSY (67 aa).

This sequence belongs to the class-I aminoacyl-tRNA synthetase family. TyrS type 1 subfamily. In terms of assembly, homodimer.

It is found in the cytoplasm. It carries out the reaction tRNA(Tyr) + L-tyrosine + ATP = L-tyrosyl-tRNA(Tyr) + AMP + diphosphate + H(+). In terms of biological role, catalyzes the attachment of tyrosine to tRNA(Tyr) in a two-step reaction: tyrosine is first activated by ATP to form Tyr-AMP and then transferred to the acceptor end of tRNA(Tyr). The sequence is that of Tyrosine--tRNA ligase from Listeria monocytogenes serotype 4a (strain HCC23).